The primary structure comprises 24 residues: Ascaphin-4 (24 aa).

Expressed by the skin glands.

The protein localises to the secreted. Antimicrobial peptide that shows higher potency against Gram-negative bacteria than against Gram-positive bacteria. Has a very week hemolytic activity. This chain is Ascaphin-4, found in Ascaphus truei (Coastal tailed frog).